The sequence spans 210 residues: Ribonuclease HII (210 aa).

An RNase H type-2 domain is found at glycine 18 to leucine 210. The a divalent metal cation site is built by aspartate 24, glutamate 25, and aspartate 116.

Belongs to the RNase HII family. Mn(2+) serves as cofactor. Requires Mg(2+) as cofactor.

It is found in the cytoplasm. The enzyme catalyses Endonucleolytic cleavage to 5'-phosphomonoester.. In terms of biological role, endonuclease that specifically degrades the RNA of RNA-DNA hybrids. This Shewanella baltica (strain OS223) protein is Ribonuclease HII.